A 280-amino-acid chain; its full sequence is Chaperone protein DnaJ 2 (280 aa).

The J domain occupies 6–70 (DYYAILGVPR…EKRRIYDTYG (65 aa)).

The protein belongs to the DnaJ family. Forms a heterononamer with DnaJ and DafA in the resting state. Three copies of each protein are present in the complex.

Its subcellular location is the cytoplasm. In terms of biological role, does not influence ATP binding or hydrolysis nor ADP release. Exerts influence on the interaction of DnaK with substrates; in the presence of DafA, DnaJ inhibits substrate binding, and substrate already bound to DnaK is displaced by DnaJ and DafA. This Thermus thermophilus (strain ATCC 27634 / DSM 579 / HB8) protein is Chaperone protein DnaJ 2 (dnaJ2).